The following is a 603-amino-acid chain: Elongation factor 4 (603 aa).

Residues 7–189 (SRLRNFCIIA…AVVDRIPSPK (183 aa)) form the tr-type G domain. Residues 19 to 24 (DHGKST) and 136 to 139 (NKVD) each bind GTP.

It belongs to the TRAFAC class translation factor GTPase superfamily. Classic translation factor GTPase family. LepA subfamily.

Its subcellular location is the cell inner membrane. It catalyses the reaction GTP + H2O = GDP + phosphate + H(+). In terms of biological role, required for accurate and efficient protein synthesis under certain stress conditions. May act as a fidelity factor of the translation reaction, by catalyzing a one-codon backward translocation of tRNAs on improperly translocated ribosomes. Back-translocation proceeds from a post-translocation (POST) complex to a pre-translocation (PRE) complex, thus giving elongation factor G a second chance to translocate the tRNAs correctly. Binds to ribosomes in a GTP-dependent manner. The chain is Elongation factor 4 from Prochlorococcus marinus (strain NATL1A).